Here is a 232-residue protein sequence, read N- to C-terminus: Small ribosomal subunit protein uS2 (232 aa).

Belongs to the universal ribosomal protein uS2 family.

This chain is Small ribosomal subunit protein uS2, found in Baumannia cicadellinicola subsp. Homalodisca coagulata.